Reading from the N-terminus, the 269-residue chain is Putative biopolymer transport protein ExbD (269 aa).

Residues 1 to 40 are Cytoplasmic-facing; sequence MASSPKAPKSHRKFQSIYHPTRPLSLWQDNQHDQGEVRIE. A helical membrane pass occupies residues 41-61; sequence IIPLIDVVFCILTFFILGAVG. The Periplasmic portion of the chain corresponds to 62-269; sequence LSRQQAISLD…GNTVPSAPQQ (208 aa). Residues 190–269 form a disordered region; it reads NGANPGMSNF…GNTVPSAPQQ (80 aa). Residues 193 to 204 show a composition bias toward low complexity; that stretch reads NPGMSNFNNSNP.

This sequence belongs to the ExbD/TolR family.

The protein localises to the cell inner membrane. This chain is Putative biopolymer transport protein ExbD, found in Synechocystis sp. (strain ATCC 27184 / PCC 6803 / Kazusa).